A 64-amino-acid polypeptide reads, in one-letter code: Lantipeptide Flvbeta.d (64 aa).

A propeptide spans 1–31 (MDNNTEKFNELAAIADESELNEMLDENITGA) (cleaved by FlvT). Residues 33 to 37 (STIQC) constitute a cross-link (lanthionine (Ser-Cys); by FlvM2). Thr-34 and Thr-41 each carry 2,3-didehydrobutyrine; by FlvM2. Cross-links (beta-methyllanthionine (Thr-Cys); by FlvM2) lie at residues 44 to 52 (TILSVVFDC), 55 to 58 (TSAC), and 59 to 62 (TPPC). The segment at residues 47–53 (SVVFDCC) is a cross-link (lanthionine (Ser-Cys); by FlvM2).

Contains LL-lanthionine, DL-lanthionine, and DL-beta-methyllanthionine, when coepressed in E.coli with the flavecin synthetase FlvM2.

Its subcellular location is the secreted. Lanthionine-containing peptide that does probably not show antibacterial activity, since its analog [+2]Flvbeta.d does not show antibacterial activity against M.luteus. Also does not show antibiotic activity when tested with [Del2]Flvalpha.a, an analog of Flvalpha.a, which is encoded by the same operon than Flvbeta.d. The bactericidal activity of lantibiotics is based on depolarization of energized bacterial cytoplasmic membranes, initiated by the formation of aqueous transmembrane pores. In Ruminococcus flavefaciens, this protein is Lantipeptide Flvbeta.d.